The primary structure comprises 340 residues: Tryptophan--tRNA ligase (340 aa).

Residues 11–13 (RPT) and 19–20 (GH) each bind ATP. The 'HIGH' region motif lies at 12 to 20 (PTGKLHLGH). Asp140 contributes to the L-tryptophan binding site. Residues 152 to 154 (GND), Leu194, and 202 to 206 (KMSKS) contribute to the ATP site. A 'KMSKS' region motif is present at residues 202-206 (KMSKS).

The protein belongs to the class-I aminoacyl-tRNA synthetase family. As to quaternary structure, homodimer.

The protein resides in the cytoplasm. The catalysed reaction is tRNA(Trp) + L-tryptophan + ATP = L-tryptophyl-tRNA(Trp) + AMP + diphosphate + H(+). Functionally, catalyzes the attachment of tryptophan to tRNA(Trp). This chain is Tryptophan--tRNA ligase, found in Streptococcus pyogenes serotype M1.